A 275-amino-acid chain; its full sequence is 3-methyl-2-oxobutanoate hydroxymethyltransferase (275 aa).

Positions 44 and 83 each coordinate Mg(2+). Residues 44–45 (DS), Asp83, and Lys113 each bind 3-methyl-2-oxobutanoate. Glu115 contacts Mg(2+). The Proton acceptor role is filled by Glu182.

The protein belongs to the PanB family. In terms of assembly, homodecamer; pentamer of dimers. Requires Mg(2+) as cofactor.

The protein localises to the cytoplasm. It carries out the reaction 3-methyl-2-oxobutanoate + (6R)-5,10-methylene-5,6,7,8-tetrahydrofolate + H2O = 2-dehydropantoate + (6S)-5,6,7,8-tetrahydrofolate. The protein operates within cofactor biosynthesis; (R)-pantothenate biosynthesis; (R)-pantoate from 3-methyl-2-oxobutanoate: step 1/2. Catalyzes the reversible reaction in which hydroxymethyl group from 5,10-methylenetetrahydrofolate is transferred onto alpha-ketoisovalerate to form ketopantoate. The polypeptide is 3-methyl-2-oxobutanoate hydroxymethyltransferase (Clostridium botulinum (strain Loch Maree / Type A3)).